The chain runs to 496 residues: MYTPVILAIDEGTTNAKAIAVDERGRILAKAAVALQVTHPQPGRSEQDAMAIWRAVCQAAEVCLSSLHRAQVVGVAISNQRESVLIWDRQTGKPMTPLVSWQDRRAEKFCQALQGSAEARLIESRTGLQVDPLFPAAKLHAMLAELPNGVARAMQGELCIGTVDCWLNWQFSGGRAFSTDYSNAARTQLFNIHRGCWDEDLLALFGIPSVCLPAVTPSSALHGHTGVTGISGLAACVPIVALIGDSHAALYGQGITQSGEIKATYGTGSSLMTTINTPHLHATGLSTTIAWHDGELRYALEGNITHTGSGFAWIGQMLGVPSVTQLTELALSAESNQGVFFVPALSGLGAPYWDVQARGLLCGLCDATTPAIIARAGLEAIAYQVADVFFAMEQVSQAALPALRVDGGATQNRWLMQFQADLLQRPLIRNHNAEVSALGAAYLGGKMLGWWEHNEQIAALPREVEVIEPSATNHAILESYQQWRTAVARARLRPEA.

ATP contacts are provided by residues 13–15 (TTN), threonine 267, glycine 308, and 408–412 (GATQN).

This sequence belongs to the FGGY kinase family.

The catalysed reaction is apulose + ATP = apulose 4-phosphate + ADP + H(+). It participates in carbohydrate metabolism. Involved in catabolism of D-apiose. Catalyzes phosphorylation of apulose to form apulose 4-phosphate. This chain is Apulose kinase, found in Pectobacterium atrosepticum (strain SCRI 1043 / ATCC BAA-672) (Erwinia carotovora subsp. atroseptica).